A 110-amino-acid polypeptide reads, in one-letter code: Large ribosomal subunit protein uL22 (110 aa).

This sequence belongs to the universal ribosomal protein uL22 family. In terms of assembly, part of the 50S ribosomal subunit.

Its function is as follows. This protein binds specifically to 23S rRNA; its binding is stimulated by other ribosomal proteins, e.g. L4, L17, and L20. It is important during the early stages of 50S assembly. It makes multiple contacts with different domains of the 23S rRNA in the assembled 50S subunit and ribosome. Functionally, the globular domain of the protein is located near the polypeptide exit tunnel on the outside of the subunit, while an extended beta-hairpin is found that lines the wall of the exit tunnel in the center of the 70S ribosome. The chain is Large ribosomal subunit protein uL22 from Shigella flexneri serotype 5b (strain 8401).